We begin with the raw amino-acid sequence, 96 residues long: Ribonuclease P protein component 1 (96 aa).

It belongs to the eukaryotic/archaeal RNase P protein component 1 family. Consists of a catalytic RNA component and at least 5 protein subunits.

The protein resides in the cytoplasm. It carries out the reaction Endonucleolytic cleavage of RNA, removing 5'-extranucleotides from tRNA precursor.. Its function is as follows. Part of ribonuclease P, a protein complex that generates mature tRNA molecules by cleaving their 5'-ends. This Methanococcus maripaludis (strain DSM 14266 / JCM 13030 / NBRC 101832 / S2 / LL) protein is Ribonuclease P protein component 1.